We begin with the raw amino-acid sequence, 229 residues long: Aldehyde oxidoreductase iron-sulfur-binding subunit PaoA (229 aa).

The tract at residues 1-21 (MSNQGEYPEDNRVGKHEPHDL) is disordered. A signal peptide (tat-type signal) is located at residues 1 to 53 (MSNQGEYPEDNRVGKHEPHDLSLTRRDLIKVSAATAATAVVYPHSTLAASVPA). The span at 9–21 (EDNRVGKHEPHDL) shows a compositional bias: basic and acidic residues. One can recognise a 2Fe-2S ferredoxin-type domain in the interval 61–137 (MPLTLKVNGK…GAEITTIEGL (77 aa)). [2Fe-2S] cluster contacts are provided by Cys-99, Cys-104, Gly-105, Cys-107, Cys-119, Cys-158, Cys-161, Cys-208, and Cys-210.

In terms of assembly, heterotrimer composed of PaoA, PaoB and PaoC. Requires [2Fe-2S] cluster as cofactor. Exported by the Tat system. The position of the signal peptide cleavage has not been experimentally proven.

The protein localises to the periplasm. It catalyses the reaction an aldehyde + A + H2O = a carboxylate + AH2 + H(+). Its activity is regulated as follows. The complex requires PaoD for activity. In terms of biological role, oxidizes aldehydes to the corresponding carboxylic acids with a preference for aromatic aldehydes. It might play a role in the detoxification of aldehydes to avoid cell damage. The protein is Aldehyde oxidoreductase iron-sulfur-binding subunit PaoA of Escherichia coli (strain K12).